We begin with the raw amino-acid sequence, 214 residues long: MERAECNRNCWISAAIAGVVVLLFTAGIGDLHWLAGLFLGVVTFVLFGALMVWLVCHERPELFEEGAGLTGTDWQRAAVDRQPETLLVGGSLGPEPFTSEAQMPIVAGAMPAEPLVEHRPEPKPAAAAKVARGADDLKRIKGIGPKISDWLNAQGVTRYDQIAAWDPATVDDFAQRLGRMGGRIEADDWVGQAKLLAAGGETGHSRRVDKGEVG.

In terms of biological role, URF2 product may be involved in the transfer of iron-sulfur clusters to the NADH dehydrogenase complex. It may also be required for the assembly of the NADH dehydrogenase complex. This is an uncharacterized protein from Paracoccus denitrificans.